The sequence spans 220 residues: Deoxyribose-phosphate aldolase (220 aa).

Residue D89 is the Proton donor/acceptor of the active site. K151 (schiff-base intermediate with acetaldehyde) is an active-site residue. The active-site Proton donor/acceptor is K180.

It belongs to the DeoC/FbaB aldolase family. DeoC type 1 subfamily.

It localises to the cytoplasm. It catalyses the reaction 2-deoxy-D-ribose 5-phosphate = D-glyceraldehyde 3-phosphate + acetaldehyde. The protein operates within carbohydrate degradation; 2-deoxy-D-ribose 1-phosphate degradation; D-glyceraldehyde 3-phosphate and acetaldehyde from 2-deoxy-alpha-D-ribose 1-phosphate: step 2/2. Functionally, catalyzes a reversible aldol reaction between acetaldehyde and D-glyceraldehyde 3-phosphate to generate 2-deoxy-D-ribose 5-phosphate. This chain is Deoxyribose-phosphate aldolase, found in Streptococcus gordonii (strain Challis / ATCC 35105 / BCRC 15272 / CH1 / DL1 / V288).